The chain runs to 498 residues: COP9 signalosome complex subunit 1 (498 aa).

Residues 249-430 (SYLEAANSFI…HVLVSTQGDK (182 aa)) form the PCI domain.

Belongs to the CSN1 family. In terms of assembly, component of the COP9 signalosome (CSN) complex.

Its subcellular location is the cytoplasm. The protein resides in the nucleus. Component of the COP9 signalosome (CSN) complex that acts as an regulator of the ubiquitin (Ubl) conjugation pathway by mediating the deneddylation of the cullin subunit of SCF-type E3 ubiquitin-protein ligase complexes. The CSN complex seems to link protein degradation to sexual development. Required for fruit body formation. The sequence is that of COP9 signalosome complex subunit 1 (csnA) from Emericella nidulans (strain FGSC A4 / ATCC 38163 / CBS 112.46 / NRRL 194 / M139) (Aspergillus nidulans).